Here is a 716-residue protein sequence, read N- to C-terminus: Polyribonucleotide nucleotidyltransferase (716 aa).

Residues aspartate 488 and aspartate 494 each contribute to the Mg(2+) site. The KH domain maps to 555-614 (PKIETITIPTDKIREVIGTGGKVIREIVATTGAKVDINDEGTVKVSASDGAKIKAAIDWI). The 69-residue stretch at 624–692 (GAIYDGKVVK…DRGKTKLSMK (69 aa)) folds into the S1 motif domain. The tract at residues 695–716 (DQETGEDLSKKEAVSPEEAVNT) is disordered.

It belongs to the polyribonucleotide nucleotidyltransferase family. Requires Mg(2+) as cofactor.

The protein resides in the cytoplasm. It catalyses the reaction RNA(n+1) + phosphate = RNA(n) + a ribonucleoside 5'-diphosphate. Functionally, involved in mRNA degradation. Catalyzes the phosphorolysis of single-stranded polyribonucleotides processively in the 3'- to 5'-direction. In Caulobacter sp. (strain K31), this protein is Polyribonucleotide nucleotidyltransferase.